The chain runs to 216 residues: Large ribosomal subunit protein uL1 (216 aa).

Belongs to the universal ribosomal protein uL1 family. As to quaternary structure, component of the large ribosomal subunit.

The protein localises to the cytoplasm. Functionally, component of the large ribosomal subunit. The ribosome is a large ribonucleoprotein complex responsible for the synthesis of proteins in the cell. In Danio rerio (Zebrafish), this protein is Large ribosomal subunit protein uL1 (rpl10a).